We begin with the raw amino-acid sequence, 419 residues long: UDP-N-acetylglucosamine 1-carboxyvinyltransferase 2 (419 aa).

24–25 (KN) contributes to the phosphoenolpyruvate binding site. Arg-94 lines the UDP-N-acetyl-alpha-D-glucosamine pocket. Catalysis depends on Cys-118, which acts as the Proton donor. Cys-118 bears the 2-(S-cysteinyl)pyruvic acid O-phosphothioketal mark. UDP-N-acetyl-alpha-D-glucosamine contacts are provided by residues 123–127 (RPIDQ), Asp-307, and Ile-329.

The protein belongs to the EPSP synthase family. MurA subfamily.

It is found in the cytoplasm. The enzyme catalyses phosphoenolpyruvate + UDP-N-acetyl-alpha-D-glucosamine = UDP-N-acetyl-3-O-(1-carboxyvinyl)-alpha-D-glucosamine + phosphate. It functions in the pathway cell wall biogenesis; peptidoglycan biosynthesis. Functionally, cell wall formation. Adds enolpyruvyl to UDP-N-acetylglucosamine. The protein is UDP-N-acetylglucosamine 1-carboxyvinyltransferase 2 of Staphylococcus aureus (strain MRSA252).